The primary structure comprises 368 residues: Putative flavoprotein monooxygenase (368 aa).

FAD is bound by residues Ala14, Glu34, Ser41, 52–53 (IT), Val110, Ala307, and Ile319.

The cofactor is FAD.

In terms of biological role, FAD-binding protein that may have monooxygenase activity using NADPH and/or NADH as an electron donor. The protein is Putative flavoprotein monooxygenase of Staphylococcus aureus (strain Mu50 / ATCC 700699).